Consider the following 551-residue polypeptide: ATP-dependent RNA helicase MRH4, mitochondrial (551 aa).

The N-terminal 13 residues, 1–13, are a transit peptide targeting the mitochondrion; sequence MPPNLTPRSFNRD. The short motif at 43-73 is the Q motif element; that stretch reads RTFDDFGLEEGLVKSLKGLYGEDGKTTPIET. The region spanning 85-293 is the Helicase ATP-binding domain; it reads ASAPIGSQRV…TTNPFFTKKE (209 aa). Residue 98–105 coordinates ATP; that stretch reads AETGSGKT. Residues 242-245 carry the DEAD box motif; that stretch reads DEAD. In terms of domain architecture, Helicase C-terminal spans 334–551; it reads TLAEDAKAAK…VGAMGKRVRT (218 aa). The interval 504-527 is disordered; the sequence is LGEGAKNNKGGKGQGPLKKDGKTA.

This sequence belongs to the DEAD box helicase family. MRH4 subfamily.

It is found in the mitochondrion. The catalysed reaction is ATP + H2O = ADP + phosphate + H(+). ATP-binding RNA helicase involved in mitochondrial RNA metabolism. Required for maintenance of mitochondrial DNA. The protein is ATP-dependent RNA helicase MRH4, mitochondrial (MRH4) of Cryptococcus neoformans var. neoformans serotype D (strain B-3501A) (Filobasidiella neoformans).